A 104-amino-acid polypeptide reads, in one-letter code: Large ribosomal subunit protein uL24 (104 aa).

The protein belongs to the universal ribosomal protein uL24 family. Part of the 50S ribosomal subunit.

In terms of biological role, one of two assembly initiator proteins, it binds directly to the 5'-end of the 23S rRNA, where it nucleates assembly of the 50S subunit. Its function is as follows. One of the proteins that surrounds the polypeptide exit tunnel on the outside of the subunit. The sequence is that of Large ribosomal subunit protein uL24 from Buchnera aphidicola subsp. Acyrthosiphon pisum (strain 5A).